We begin with the raw amino-acid sequence, 475 residues long: Flotillin-like protein 4 (475 aa).

2 coiled-coil regions span residues 235 to 255 (ENQREAEVAEANSELAKKKAA) and 305 to 325 (QYETKVQEANWELYKKQKEAE).

This sequence belongs to the band 7/mec-2 family. Flotillin subfamily. Expressed in roots and nodules. Primarily expressed in vascular tissues. Upon induction of nodulation, expansion of expression in the root cortex in the region of elongating root hairs, which will eventually become colonized by bacteria. Expressed in the infection zone in nodules.

It localises to the membrane. It is found in the caveola. The protein localises to the cell membrane. Its function is as follows. May act as a scaffolding protein within caveolar membranes, functionally participating in formation of caveolae or caveolae-like vesicles. Required for normal infection threads initiation and elongation and nodulation. Probably involved in polar growth of the infection thread. In Medicago truncatula (Barrel medic), this protein is Flotillin-like protein 4 (FLOT4).